Consider the following 221-residue polypeptide: Prolactin-3B1 (221 aa).

Residues 1-30 (MQLPLTPLSFSGTLLLMAMSNFLLWEHVTS) form the signal peptide. 2 disulfide bridges follow: C81–C196 and C213–C221.

It belongs to the somatotropin/prolactin family.

The protein resides in the secreted. The protein is Prolactin-3B1 (PRL3B1) of Mesocricetus auratus (Golden hamster).